The sequence spans 811 residues: Hypoxia-inducible factor 1-alpha (811 aa).

The tract at residues 1-27 (MDSPGGVTDKKRISSERRKEKSRDAAR) is disordered. Over residues 8-27 (TDKKRISSERRKEKSRDAAR) the composition is skewed to basic and acidic residues. Residues 17 to 70 (RRKEKSRDAARCRRSKESEVFYELAHQLPLPHTVSAHLDKASIMRLTISYLRMR) form the bHLH domain. PAS domains follow at residues 80–157 (TEAN…PVKK) and 228–298 (PHPS…FTKG). The PAC domain maps to 302 to 345 (TGQYRMLAKQGGYVWVETQATVIYNTKNSQPQCIVCVNYVLSGI). The segment at 401–587 (APAAGDTIIS…LSPLESSSSG (187 aa)) is ODD. The residue at position 402 (P402) is a 4-hydroxyproline. Positions 490 to 518 (PQVQEQPTSPSDASTSQSSPEPSSPNDYC) are disordered. The span at 496–514 (PTSPSDASTSQSSPEPSSP) shows a compositional bias: low complexity. Positions 529–573 (FKLELVEKLFAIDTEAKNPFSTQETDLDLEMLAPYIPMDDDFQLR) are NTAD. P562 is subject to 4-hydroxyproline. The segment at 576 to 785 (DQLSPLESSS…GLPQLTSYDC (210 aa)) is ID. Positions 634–652 (NDTSSAPASPYSGNRSRTA) are enriched in polar residues. Positions 634 to 655 (NDTSSAPASPYSGNRSRTASPI) are disordered. Short sequence motifs (nuclear localization signal) lie at residues 703–706 (RKRK) and 718–721 (GIGS). The CTAD stretch occupies residues 771-811 (SMDESGLPQLTSYDCEVNAPIQGNRNLLQGEELLRALDQVN). (3S)-3-hydroxyasparagine is present on N788.

In terms of assembly, efficient DNA binding requires heterodimerization of an alpha and a beta/ARNT subunit. In terms of processing, in normoxia, is hydroxylated on Pro-402 and Pro-562. The hydroxylated prolines promote interaction with VHL, initiating rapid ubiquitination and subsequent proteasomal degradation. Under hypoxia, proline hydroxylation is impaired and ubiquitination is attenuated, resulting in stabilization. Post-translationally, in normoxia, is hydroxylated on Asn-788, thus abrogating interaction with CREBBP and EP300 and preventing transcriptional activation. The iron and 2-oxoglutarate dependent 3-hydroxylation of asparagine is (S) stereospecific within HIF CTAD domains.

The protein localises to the cytoplasm. Its subcellular location is the nucleus. It is found in the nucleus speckle. Its activity is regulated as follows. Induced by reactive oxygen species (ROS). Its function is as follows. Functions as a master transcriptional regulator of the adaptive response to hypoxia. Under hypoxic conditions, activates the transcription of over 40 genes, including erythropoietin, glucose transporters, glycolytic enzymes, vascular endothelial growth factor, HILPDA, and other genes whose protein products increase oxygen delivery or facilitate metabolic adaptation to hypoxia. Plays an essential role in embryonic vascularization, tumor angiogenesis and pathophysiology of ischemic disease. The chain is Hypoxia-inducible factor 1-alpha (HIF1A) from Gallus gallus (Chicken).